Consider the following 241-residue polypeptide: MSTLFISDIHLCAQRPDMTAALVRFLAHDAPGADALYVLGDLFEFWIGDDDPNPLHGEVADAFAALSQQGVPLYFIHGNRDFLLGQAFAKRAGMTLLGDPCVIELYGERVVLSHGDLLCTLDEGYQKFRRITQLKWLRWLFLRLPLARRQAIAHKMRGQSQMENAHKSQTIMDVTPAAVDQMLRQHDCRMMIHGHTHRPAIHDFQLDGAPARRIVLGDWFEQGSVLICRPGEQRLEQHALI.

The Mn(2+) site is built by Asp-8, His-10, Asp-41, Asn-79, and His-114. 79-80 (NR) is a binding site for substrate. Substrate is bound by residues Asp-122, Ser-160, Asn-164, Lys-167, and His-195. His-195 and His-197 together coordinate Mn(2+).

This sequence belongs to the LpxH family. Mn(2+) serves as cofactor.

It localises to the cell inner membrane. The enzyme catalyses UDP-2-N,3-O-bis[(3R)-3-hydroxytetradecanoyl]-alpha-D-glucosamine + H2O = 2-N,3-O-bis[(3R)-3-hydroxytetradecanoyl]-alpha-D-glucosaminyl 1-phosphate + UMP + 2 H(+). The protein operates within glycolipid biosynthesis; lipid IV(A) biosynthesis; lipid IV(A) from (3R)-3-hydroxytetradecanoyl-[acyl-carrier-protein] and UDP-N-acetyl-alpha-D-glucosamine: step 4/6. Functionally, hydrolyzes the pyrophosphate bond of UDP-2,3-diacylglucosamine to yield 2,3-diacylglucosamine 1-phosphate (lipid X) and UMP by catalyzing the attack of water at the alpha-P atom. Involved in the biosynthesis of lipid A, a phosphorylated glycolipid that anchors the lipopolysaccharide to the outer membrane of the cell. The polypeptide is UDP-2,3-diacylglucosamine hydrolase (Aeromonas hydrophila subsp. hydrophila (strain ATCC 7966 / DSM 30187 / BCRC 13018 / CCUG 14551 / JCM 1027 / KCTC 2358 / NCIMB 9240 / NCTC 8049)).